The chain runs to 401 residues: Probable inactive purple acid phosphatase 14 (401 aa).

The signal sequence occupies residues 1–30 (MEETRRRFVISSVLSVSLIYLCLSTCHVSA). The N-linked (GlcNAc...) asparagine glycan is linked to asparagine 79. Asparagine 197 contributes to the substrate binding site. Asparagine 197 serves as a coordination point for Zn(2+). Asparagine 246 carries an N-linked (GlcNAc...) asparagine glycan. Histidine 256 is a Zn(2+) binding site. An N-linked (GlcNAc...) asparagine glycan is attached at asparagine 266. Zn(2+) is bound at residue histidine 305. 305 to 307 (HDH) lines the substrate pocket. Histidine 307 contributes to the Fe cation binding site. Residues asparagine 371 and asparagine 384 are each glycosylated (N-linked (GlcNAc...) asparagine).

The protein belongs to the metallophosphoesterase superfamily. Purple acid phosphatase family. Homodimer. It depends on Fe cation as a cofactor. Requires Zn(2+) as cofactor. As to expression, specifically expressed in flowers.

The protein localises to the secreted. This is Probable inactive purple acid phosphatase 14 (PAP14) from Arabidopsis thaliana (Mouse-ear cress).